We begin with the raw amino-acid sequence, 299 residues long: 4-diphosphocytidyl-2-C-methyl-D-erythritol kinase (299 aa).

The active site involves lysine 18. 104–114 (PIASGIGGGSS) serves as a coordination point for ATP. Residue aspartate 146 is part of the active site.

Belongs to the GHMP kinase family. IspE subfamily.

It catalyses the reaction 4-CDP-2-C-methyl-D-erythritol + ATP = 4-CDP-2-C-methyl-D-erythritol 2-phosphate + ADP + H(+). It functions in the pathway isoprenoid biosynthesis; isopentenyl diphosphate biosynthesis via DXP pathway; isopentenyl diphosphate from 1-deoxy-D-xylulose 5-phosphate: step 3/6. In terms of biological role, catalyzes the phosphorylation of the position 2 hydroxy group of 4-diphosphocytidyl-2C-methyl-D-erythritol. This is 4-diphosphocytidyl-2-C-methyl-D-erythritol kinase from Brucella melitensis biotype 1 (strain ATCC 23456 / CCUG 17765 / NCTC 10094 / 16M).